We begin with the raw amino-acid sequence, 193 residues long: Putative manganese efflux pump MntP (193 aa).

A run of 6 helical transmembrane segments spans residues 8–28 (LLAI…GIIL), 37–57 (LVMA…GWMF), 61–81 (FSHL…AFLG), 109–129 (MAIA…LLGI), 138–158 (PILI…YFGI), and 172–192 (LWGG…HLFL).

The protein belongs to the MntP (TC 9.B.29) family.

The protein localises to the cell inner membrane. Its function is as follows. Probably functions as a manganese efflux pump. This chain is Putative manganese efflux pump MntP, found in Bacteroides thetaiotaomicron (strain ATCC 29148 / DSM 2079 / JCM 5827 / CCUG 10774 / NCTC 10582 / VPI-5482 / E50).